Consider the following 831-residue polypeptide: Histone acetyltransferase SAS3 (831 aa).

The MYST-type HAT domain occupies 267 to 573; the sequence is VWFSQIEYIV…VKYDKLLWEP (307 aa). Residues 300–325 form a C2HC MYST-type zinc finger; it reads VFICEFCLKYMTSRYTFYRHQLKCLT. K367 carries the post-translational modification N6-acetyllysine; by autocatalysis. Acetyl-CoA-binding positions include 419–421 and 426–432; these read ILT and QRKGYGQ. E452 serves as the catalytic Proton donor/acceptor. Position 456 (S456) interacts with acetyl-CoA. 2 disordered regions span residues 614–639 and 719–813; these read ENYN…KTSK and PLGN…SHIR. Positions 621-633 are enriched in basic residues; that stretch reads AHNKRRRRRRRSS. Acidic residues-rich tracts occupy residues 736-746 and 755-794; these read EQDEVENDVDT and KEDE…DDDE. Positions 795-812 are enriched in basic and acidic residues; sequence DGKRKGQEQDENDIESHI.

It belongs to the MYST (SAS/MOZ) family. As to quaternary structure, component of the NuA3 histone acetyltransferase (HAT) complex. The NuA3 HAT complex has 2 functionally distinct forms that participate in transcription. The NuA3a HAT complex is composed of at least NTO1, SAS3, TAF14, YNG1 and EAF6. The NuA3b HAT complex contains an additional subunit, PDP3. SAS3 interacts with CDC68/SPT16. Post-translationally, autoacetylation at Lys-367 is required for proper function.

It localises to the nucleus. It catalyses the reaction L-lysyl-[protein] + acetyl-CoA = N(6)-acetyl-L-lysyl-[protein] + CoA + H(+). Functionally, catalytic component of the NuA3 histone acetyltransferase complex, that acetylates H3K14. The NuA3 HAT complex has 2 functionally distinct forms. NuA3a binds H3K4me3, through the PHD finger of YNG1, and acetylates H3K14 at the promoter region of actively transcribed genes to promote transcription initiation. NuA3b binds H3K36me3 at the coding regions of actively transcribed genes, through the PWWP domain of PDP3, and coordinates transcription elongation. In vitro, SAS3 acetylates free histones H3 and H4. It is involved in silencing the HMR locus. The protein is Histone acetyltransferase SAS3 of Saccharomyces cerevisiae (strain ATCC 204508 / S288c) (Baker's yeast).